Here is a 1060-residue protein sequence, read N- to C-terminus: CCR4-NOT transcriptional complex subunit CAF120 (1060 aa).

The region spanning 75–204 (RRYHEGVFLI…WNSAIRLCLY (130 aa)) is the PH domain. Low complexity predominate over residues 465-481 (KLSYGSKSSSNNSSKNS). Disordered stretches follow at residues 465-589 (KLSY…TSCG), 801-942 (EHRS…NMQA), and 955-1060 (QQPN…PYAQ). Over residues 490–504 (LSSSSEQDLNNSDSP) the composition is skewed to polar residues. Residues Ser491, Ser510, Ser518, Ser538, and Ser556 each carry the phosphoserine modification. 2 stretches are compositionally biased toward basic and acidic residues: residues 571–589 (NDRK…TSCG) and 801–814 (EHRS…RSPE). Over residues 845–883 (SITPQRGQPVPSGQQISSYVQPANINSPNKMYGANNSAM) the composition is skewed to polar residues. Phosphoserine is present on residues Ser871 and Ser885. Composition is skewed to polar residues over residues 900–923 (QGWN…TQPQ), 931–942 (PYSTGNRPNMQA), and 1048–1060 (FMPS…PYAQ).

Belongs to the CAF120 family. In terms of assembly, subunit of the 1.0 MDa CCR4-NOT core complex that contains CCR4, CAF1, CAF120, NOT1, NOT2, NOT3, NOT4, NOT5, CAF40 and CAF130. In the complex interacts with NOT1. The core complex probably is part of a less characterized 1.9 MDa CCR4-NOT complex.

The protein localises to the cytoplasm. It localises to the nucleus. Its subcellular location is the bud neck. Functionally, acts as a component of the CCR4-NOT core complex, which in the nucleus seems to be a general transcription factor, and in the cytoplasm the major mRNA deadenylase involved in mRNA turnover. The NOT protein subcomplex negatively regulates the basal and activated transcription of many genes. Preferentially affects TC-type TATA element-dependent transcription. Could directly or indirectly inhibit component(s) of the general transcription machinery. The sequence is that of CCR4-NOT transcriptional complex subunit CAF120 (CAF120) from Saccharomyces cerevisiae (strain ATCC 204508 / S288c) (Baker's yeast).